Reading from the N-terminus, the 673-residue chain is Probable lysophospholipase 4 (673 aa).

Positions 1–19 (MYVNYIGLFAFVQISLTLA) are cleaved as a signal peptide. N-linked (GlcNAc...) asparagine glycans are attached at residues Asn72, Asn125, Asn191, Asn194, Asn272, Asn301, Asn374, Asn404, Asn409, Asn481, Asn516, Asn545, and Asn574. One can recognise a PLA2c domain in the interval 74–615 (TCSNDNLLRP…QEYCWDGTLA (542 aa)). Residues 631–653 (TTSRAPSGTTSGTASSTTSSSVA) form a disordered region.

This sequence belongs to the lysophospholipase family.

It is found in the secreted. The enzyme catalyses a 1-acyl-sn-glycero-3-phosphocholine + H2O = sn-glycerol 3-phosphocholine + a fatty acid + H(+). In terms of biological role, catalyzes the release of fatty acids from lysophospholipids. This Schizosaccharomyces pombe (strain 972 / ATCC 24843) (Fission yeast) protein is Probable lysophospholipase 4 (plb4).